A 123-amino-acid chain; its full sequence is Cell division protein SepF (123 aa).

The protein belongs to the SepF family. Homodimer. Interacts with FtsZ.

It localises to the cytoplasm. Functionally, cell division protein that is part of the divisome complex and is recruited early to the Z-ring. Probably stimulates Z-ring formation, perhaps through the cross-linking of FtsZ protofilaments. Its function overlaps with FtsA. The chain is Cell division protein SepF from Tropheryma whipplei (strain TW08/27) (Whipple's bacillus).